The following is a 206-amino-acid chain: High frequency lysogenization protein HflD homolog (206 aa).

This sequence belongs to the HflD family.

Its subcellular location is the cytoplasm. The protein localises to the cell inner membrane. This chain is High frequency lysogenization protein HflD homolog, found in Ectopseudomonas mendocina (strain ymp) (Pseudomonas mendocina).